We begin with the raw amino-acid sequence, 62 residues long: Conotoxin reg3.5 (62 aa).

The signal sequence occupies residues 1 to 22 (MMFKLGVLLTICLLLFPLTGTA). The propeptide occupies 23–49 (LDGDQLAEHMLDISSGINDRWFDPVRK). Intrachain disulfides connect Cys-50–Cys-60, Cys-51–Cys-58, and Cys-56–Cys-61.

The protein belongs to the conotoxin M superfamily. Expressed by the venom duct.

Its subcellular location is the secreted. The chain is Conotoxin reg3.5 from Conus regius (Crown cone).